A 447-amino-acid chain; its full sequence is Growth/differentiation factor 7 (447 aa).

The N-terminal stretch at 1–19 (MDLSAAAALCLWLLSACRP) is a signal peptide. Positions 20–318 (RDGLEAAAVL…AVTAGRRRRR (299 aa)) are excised as a propeptide. N80 is a glycosylation site (N-linked (GlcNAc...) asparagine). Residues 292-346 (LAAQPPPDPGTGTGSPRAVTAGRRRRRTALAGTRTAQGSGGGAGRGHGRRGRSRC) form a disordered region. Residues 337 to 346 (GHGRRGRSRC) show a composition bias toward basic residues. 3 disulfide bridges follow: C346/C412, C375/C444, and C379/C446.

The protein belongs to the TGF-beta family. As to quaternary structure, homodimer; disulfide-linked. As to expression, highly expressed in the primary aera of brain neocortex.

The protein resides in the secreted. In terms of biological role, may play an active role in the motor area of the primate neocortex. The sequence is that of Growth/differentiation factor 7 (GDF7) from Chlorocebus aethiops (Green monkey).